A 400-amino-acid chain; its full sequence is Lysophospholipid transporter LplT (400 aa).

The next 12 membrane-spanning stretches (helical) occupy residues 19 to 39 (VIVAQFLSAFGDNALLFATLA), 53 to 73 (VLQMVFVGAYILFAPFVGQIA), 91 to 111 (AGAAGICLGVNPFVGYTLVGI), 139 to 159 (LMEASTIAAILLGSVAGGVLA), 164 to 184 (IAALVACALAYAGAVAANLFI), 195 to 213 (SWRLSAMTRSFFSACVVLW), 227 to 247 (LFWGAGVTLRFLLVLWVPVAL), 257 to 277 (YLNAMVAVGIVVGAGAAAKLV), 281 to 301 (TVSRCMPAGILIGVVVAIFSL), 304 to 324 (ALLPAYALLLLIGMLGGFFVV), 352 to 372 (NSAMLLMLGLYSLAVLVGVPA), and 373 to 393 (VAIGIGFGVLFALAIAALWIW).

It belongs to the major facilitator superfamily. LplT (TC 2.A.1.42) family.

It localises to the cell inner membrane. Its function is as follows. Catalyzes the facilitated diffusion of 2-acyl-glycero-3-phosphoethanolamine (2-acyl-GPE) into the cell. In Salmonella agona (strain SL483), this protein is Lysophospholipid transporter LplT.